The primary structure comprises 246 residues: Ribonuclease 3 (246 aa).

An RNase III domain is found at 18–147 (FKELQKKIGI…FIGALYLDQG (130 aa)). Position 60 (Glu-60) interacts with Mg(2+). Residue Asp-64 is part of the active site. Residues Asp-133 and Glu-136 each contribute to the Mg(2+) site. Residue Glu-136 is part of the active site. Residues 173-242 (DFKSQLQELV…AQMALQKLKT (70 aa)) form the DRBM domain.

The protein belongs to the ribonuclease III family. As to quaternary structure, homodimer. Mg(2+) is required as a cofactor.

The protein localises to the cytoplasm. It catalyses the reaction Endonucleolytic cleavage to 5'-phosphomonoester.. In terms of biological role, digests double-stranded RNA. Involved in the processing of primary rRNA transcript to yield the immediate precursors to the large and small rRNAs (23S and 16S). Processes some mRNAs, and tRNAs when they are encoded in the rRNA operon. Processes pre-crRNA and tracrRNA of type II CRISPR loci if present in the organism. This is Ribonuclease 3 from Geobacillus sp. (strain WCH70).